Reading from the N-terminus, the 142-residue chain is Large ribosomal subunit protein uL16 (142 aa).

This sequence belongs to the universal ribosomal protein uL16 family. Part of the 50S ribosomal subunit.

Its function is as follows. Binds 23S rRNA and is also seen to make contacts with the A and possibly P site tRNAs. The protein is Large ribosomal subunit protein uL16 of Trichormus variabilis (strain ATCC 29413 / PCC 7937) (Anabaena variabilis).